A 93-amino-acid polypeptide reads, in one-letter code: Integration host factor subunit beta (93 aa).

The protein belongs to the bacterial histone-like protein family. In terms of assembly, heterodimer of an alpha and a beta chain.

In terms of biological role, this protein is one of the two subunits of integration host factor, a specific DNA-binding protein that functions in genetic recombination as well as in transcriptional and translational control. The chain is Integration host factor subunit beta from Rhodospirillum centenum (strain ATCC 51521 / SW).